The following is a 692-amino-acid chain: Protein adenylyltransferase SelO-1, mitochondrial (692 aa).

Residues 1–24 constitute a mitochondrion transit peptide; the sequence is MASVGSRLTRFYISRPGVIARRFL. Positions 142, 144, 176, 188, 189, 246, and 253 each coordinate ATP. D337 (proton acceptor) is an active-site residue. 2 residues coordinate Mg(2+): N338 and D347. D347 serves as a coordination point for ATP. Positions 637-676 are disordered; sequence LEQPGWMGRGGAAIPGERDETEEEGSNSSGAGARGLVPYD. A non-standard amino acid (selenocysteine) is located at residue U690.

Belongs to the SELO family. It depends on Mg(2+) as a cofactor.

It localises to the mitochondrion. It catalyses the reaction L-tyrosyl-[protein] + ATP = O-(5'-adenylyl)-L-tyrosyl-[protein] + diphosphate. The catalysed reaction is L-threonyl-[protein] + ATP = 3-O-(5'-adenylyl)-L-threonyl-[protein] + diphosphate. The enzyme catalyses L-seryl-[protein] + ATP = 3-O-(5'-adenylyl)-L-seryl-[protein] + diphosphate. Its function is as follows. Catalyzes the transfer of adenosine 5'-monophosphate (AMP) to Ser, Thr and Tyr residues of target proteins (AMPylation). May be a redox-active mitochondrial selenoprotein which interacts with a redox target protein. The polypeptide is Protein adenylyltransferase SelO-1, mitochondrial (Danio rerio (Zebrafish)).